An 813-amino-acid chain; its full sequence is Protein SBE22 (813 aa).

3 disordered regions span residues 1–66 (MIRP…HGHA), 107–240 (EIFS…GEFG), and 331–359 (QKDS…NRES). Residues 56–66 (RPSDNLFHGHA) show a composition bias toward basic and acidic residues. A compositionally biased stretch (low complexity) spans 107–121 (EIFSTSSSDTQSNIS). The segment covering 127–138 (SEDHSFGMDKSV) has biased composition (basic and acidic residues). Composition is skewed to polar residues over residues 139–160 (DNSS…NGDS), 169–200 (VSVN…NRSM), and 214–234 (KNSS…NRSV).

The protein belongs to the SBE2 family.

The protein resides in the cytoplasm. It is found in the golgi apparatus. In terms of biological role, with SBE2, is involved in cell wall integrity and polarity processes like bud growth. The protein is Protein SBE22 (SBE22) of Candida glabrata (strain ATCC 2001 / BCRC 20586 / JCM 3761 / NBRC 0622 / NRRL Y-65 / CBS 138) (Yeast).